The sequence spans 234 residues: Adenosine 5'-phosphosulfate reductase (234 aa).

Residues cysteine 120, cysteine 121, cysteine 203, and cysteine 206 each contribute to the [4Fe-4S] cluster site. Residue cysteine 229 is the Nucleophile; cysteine thiosulfonate intermediate of the active site.

This sequence belongs to the PAPS reductase family. CysH subfamily. It depends on [4Fe-4S] cluster as a cofactor.

Its subcellular location is the cytoplasm. The catalysed reaction is [thioredoxin]-disulfide + sulfite + AMP + 2 H(+) = adenosine 5'-phosphosulfate + [thioredoxin]-dithiol. It functions in the pathway sulfur metabolism; hydrogen sulfide biosynthesis; sulfite from sulfate. In terms of biological role, catalyzes the formation of sulfite from adenosine 5'-phosphosulfate (APS) using thioredoxin as an electron donor. This chain is Adenosine 5'-phosphosulfate reductase, found in Bacillus cytotoxicus (strain DSM 22905 / CIP 110041 / 391-98 / NVH 391-98).